The following is a 309-amino-acid chain: Ribokinase (309 aa).

Residues 14–16, 42–46, and Glu-143 contribute to the substrate site; these read NAD and GKGAN. ATP contacts are provided by residues Asn-187 and 223-228; that span reads TLGSRG. K(+) is bound by residues Asp-249 and Ile-251. Residues 254-255 and His-279 contribute to the ATP site; that span reads GD. A substrate-binding site is contributed by Asp-255. The active-site Proton acceptor is Asp-255. 4 residues coordinate K(+): Ala-285, Arg-288, Gly-290, and Ser-294.

The protein belongs to the carbohydrate kinase PfkB family. Ribokinase subfamily. Homodimer. Mg(2+) serves as cofactor.

The protein resides in the cytoplasm. The enzyme catalyses D-ribose + ATP = D-ribose 5-phosphate + ADP + H(+). Its pathway is carbohydrate metabolism; D-ribose degradation; D-ribose 5-phosphate from beta-D-ribopyranose: step 2/2. With respect to regulation, activated by a monovalent cation that binds near, but not in, the active site. The most likely occupant of the site in vivo is potassium. Ion binding induces a conformational change that may alter substrate affinity. Catalyzes the phosphorylation of ribose at O-5 in a reaction requiring ATP and magnesium. The resulting D-ribose-5-phosphate can then be used either for sythesis of nucleotides, histidine, and tryptophan, or as a component of the pentose phosphate pathway. The polypeptide is Ribokinase (Escherichia coli O157:H7).